A 551-amino-acid polypeptide reads, in one-letter code: Electron transfer flavoprotein-ubiquinone oxidoreductase (551 aa).

An FAD-binding site is contributed by 10–24 (VVIVGAGPAGLSAAC). [4Fe-4S] cluster is bound by residues cysteine 496, cysteine 520, cysteine 523, and cysteine 526. One can recognise a 4Fe-4S ferredoxin-type domain in the interval 511 to 540 (KRFQINAQNCVHCKTCDIKDPAQNITWVAP).

This sequence belongs to the ETF-QO/FixC family. The cofactor is [4Fe-4S] cluster. FAD serves as cofactor.

It catalyses the reaction a ubiquinone + reduced [electron-transfer flavoprotein] = a ubiquinol + oxidized [electron-transfer flavoprotein] + H(+). In terms of biological role, accepts electrons from ETF and reduces ubiquinone. The chain is Electron transfer flavoprotein-ubiquinone oxidoreductase from Pseudomonas aeruginosa (strain ATCC 15692 / DSM 22644 / CIP 104116 / JCM 14847 / LMG 12228 / 1C / PRS 101 / PAO1).